The sequence spans 122 residues: Basic phospholipase A2 CbII (122 aa).

7 disulfide bridges follow: C26–C115, C28–C44, C43–C95, C49–C122, C50–C88, C57–C81, and C75–C86. Residues Y27, G29, and G31 each coordinate Ca(2+). H47 is an active-site residue. Residue D48 coordinates Ca(2+). D89 is a catalytic residue.

Belongs to the phospholipase A2 family. Group I subfamily. D49 sub-subfamily. In terms of assembly, heterodimer of an acidic subunit (CbIalpha or CbIbeta) and a basic subunit (CbII). The acidic subunit is non-toxic, and increases the toxicity of the basic subunit. Ca(2+) serves as cofactor. Expressed by the venom gland.

The protein localises to the secreted. It carries out the reaction a 1,2-diacyl-sn-glycero-3-phosphocholine + H2O = a 1-acyl-sn-glycero-3-phosphocholine + a fatty acid + H(+). Heterodimer: presynaptic neurotoxin. Its function is as follows. Monomer: Snake venom phospholipase A2 (PLA2) that exhibits strong anticoagulant effects by binding to factor Xa (F10) and inhibiting the prothrombinase activity (IC(50) is 20 nM). PLA2 catalyzes the calcium-dependent hydrolysis of the 2-acyl groups in 3-sn-phosphoglycerides. The chain is Basic phospholipase A2 CbII from Pseudocerastes fieldi (Field's horned viper).